The chain runs to 506 residues: Lysine--tRNA ligase (506 aa).

Residues Glu416 and Glu423 each coordinate Mg(2+).

This sequence belongs to the class-II aminoacyl-tRNA synthetase family. Homodimer. Requires Mg(2+) as cofactor.

The protein localises to the cytoplasm. It carries out the reaction tRNA(Lys) + L-lysine + ATP = L-lysyl-tRNA(Lys) + AMP + diphosphate. The sequence is that of Lysine--tRNA ligase from Sodalis glossinidius (strain morsitans).